A 264-amino-acid polypeptide reads, in one-letter code: Thymidylate synthase (264 aa).

Arg21 is a dUMP binding site. His51 contributes to the (6R)-5,10-methylene-5,6,7,8-tetrahydrofolate binding site. Position 126–127 (126–127 (RR)) interacts with dUMP. Cys146 functions as the Nucleophile in the catalytic mechanism. Residues 166–169 (RSCD), Asn177, and 207–209 (HLY) each bind dUMP. Asp169 serves as a coordination point for (6R)-5,10-methylene-5,6,7,8-tetrahydrofolate. (6R)-5,10-methylene-5,6,7,8-tetrahydrofolate is bound at residue Ala263.

This sequence belongs to the thymidylate synthase family. Bacterial-type ThyA subfamily. Homodimer.

It is found in the cytoplasm. The enzyme catalyses dUMP + (6R)-5,10-methylene-5,6,7,8-tetrahydrofolate = 7,8-dihydrofolate + dTMP. It participates in pyrimidine metabolism; dTTP biosynthesis. In terms of biological role, catalyzes the reductive methylation of 2'-deoxyuridine-5'-monophosphate (dUMP) to 2'-deoxythymidine-5'-monophosphate (dTMP) while utilizing 5,10-methylenetetrahydrofolate (mTHF) as the methyl donor and reductant in the reaction, yielding dihydrofolate (DHF) as a by-product. This enzymatic reaction provides an intracellular de novo source of dTMP, an essential precursor for DNA biosynthesis. The polypeptide is Thymidylate synthase (Xenorhabdus nematophila (strain ATCC 19061 / DSM 3370 / CCUG 14189 / LMG 1036 / NCIMB 9965 / AN6)).